We begin with the raw amino-acid sequence, 383 residues long: Forkhead box protein I3-B (383 aa).

The span at M1–T12 shows a compositional bias: polar residues. Disordered regions lie at residues M1 to G55, D215 to S277, and T317 to H348. The span at P25–Y35 shows a compositional bias: low complexity. The segment at residues R130–K224 is a DNA-binding region (fork-head). The Nuclear localization signal motif lies at R220–K226. Over residues S234–S249 the composition is skewed to low complexity. A compositionally biased stretch (polar residues) spans P250 to S277. Residues T317 to S330 are compositionally biased toward low complexity.

In terms of tissue distribution, expressed in ionocyte precursors.

The protein localises to the nucleus. In terms of biological role, transcription factor required for epithelial cell differentiation. Involved in specification of skin ionocytes from epidermal precursors. The polypeptide is Forkhead box protein I3-B (Danio rerio (Zebrafish)).